The following is a 207-amino-acid chain: Superoxide dismutase [Mn] (207 aa).

Mn(2+) contacts are provided by H27, H82, D169, and H173.

The protein belongs to the iron/manganese superoxide dismutase family. It depends on Mn(2+) as a cofactor.

It carries out the reaction 2 superoxide + 2 H(+) = H2O2 + O2. In terms of biological role, destroys superoxide anion radicals which are normally produced within the cells and which are toxic to biological systems. This chain is Superoxide dismutase [Mn] (sodA), found in Yersinia enterocolitica.